Here is a 204-residue protein sequence, read N- to C-terminus: High frequency lysogenization protein HflD homolog (204 aa).

It belongs to the HflD family.

The protein resides in the cytoplasm. Its subcellular location is the cell inner membrane. This Xanthomonas axonopodis pv. citri (strain 306) protein is High frequency lysogenization protein HflD homolog.